Here is a 75-residue protein sequence, read N- to C-terminus: Small ribosomal subunit protein bS18 (75 aa).

The protein belongs to the bacterial ribosomal protein bS18 family. Part of the 30S ribosomal subunit. Forms a tight heterodimer with protein bS6.

Binds as a heterodimer with protein bS6 to the central domain of the 16S rRNA, where it helps stabilize the platform of the 30S subunit. This chain is Small ribosomal subunit protein bS18, found in Shewanella amazonensis (strain ATCC BAA-1098 / SB2B).